The following is a 412-amino-acid chain: Histidine--tRNA ligase (412 aa).

Belongs to the class-II aminoacyl-tRNA synthetase family. As to quaternary structure, homodimer.

It localises to the cytoplasm. The catalysed reaction is tRNA(His) + L-histidine + ATP = L-histidyl-tRNA(His) + AMP + diphosphate + H(+). The protein is Histidine--tRNA ligase of Rickettsia typhi (strain ATCC VR-144 / Wilmington).